Reading from the N-terminus, the 424-residue chain is Arginine biosynthesis bifunctional protein ArgJ (424 aa).

The substrate site is built by Thr-172, Lys-198, Thr-209, Glu-296, Asn-419, and Ser-424. Residue Thr-209 is the Nucleophile of the active site.

Belongs to the ArgJ family. As to quaternary structure, heterotetramer of two alpha and two beta chains.

Its subcellular location is the cytoplasm. The catalysed reaction is N(2)-acetyl-L-ornithine + L-glutamate = N-acetyl-L-glutamate + L-ornithine. The enzyme catalyses L-glutamate + acetyl-CoA = N-acetyl-L-glutamate + CoA + H(+). It participates in amino-acid biosynthesis; L-arginine biosynthesis; L-ornithine and N-acetyl-L-glutamate from L-glutamate and N(2)-acetyl-L-ornithine (cyclic): step 1/1. The protein operates within amino-acid biosynthesis; L-arginine biosynthesis; N(2)-acetyl-L-ornithine from L-glutamate: step 1/4. In terms of biological role, catalyzes two activities which are involved in the cyclic version of arginine biosynthesis: the synthesis of N-acetylglutamate from glutamate and acetyl-CoA as the acetyl donor, and of ornithine by transacetylation between N(2)-acetylornithine and glutamate. This is Arginine biosynthesis bifunctional protein ArgJ from Gluconobacter oxydans (strain 621H) (Gluconobacter suboxydans).